We begin with the raw amino-acid sequence, 159 residues long: Globin CTT-W (159 aa).

The first 16 residues, 1-16 (MKFLVILTLCIAGAIA), serve as a signal peptide directing secretion. The region spanning 17-159 (HCDKAPFIKA…HHAIVYSILE (143 aa)) is the Globin domain. Heme b-binding residues include His73 and His108.

The protein belongs to the globin family.

The chain is Globin CTT-W (CTT-W) from Chironomus thummi thummi (Midge).